Consider the following 420-residue polypeptide: Exodeoxyribonuclease 7 large subunit (420 aa).

Belongs to the XseA family. In terms of assembly, heterooligomer composed of large and small subunits.

It localises to the cytoplasm. It catalyses the reaction Exonucleolytic cleavage in either 5'- to 3'- or 3'- to 5'-direction to yield nucleoside 5'-phosphates.. Functionally, bidirectionally degrades single-stranded DNA into large acid-insoluble oligonucleotides, which are then degraded further into small acid-soluble oligonucleotides. The protein is Exodeoxyribonuclease 7 large subunit of Helicobacter pylori (strain HPAG1).